Consider the following 148-residue polypeptide: UPF0260 protein Spro_2751 (148 aa).

The protein belongs to the UPF0260 family.

The chain is UPF0260 protein Spro_2751 from Serratia proteamaculans (strain 568).